A 435-amino-acid polypeptide reads, in one-letter code: AMSH-like protease sst2 (435 aa).

Residues 162 to 181 (TDLLSPDSQKLSKSSSDLPQ) are compositionally biased toward low complexity. A disordered region spans residues 162 to 185 (TDLLSPDSQKLSKSSSDLPQFDYP). Residue Thr-192 is modified to Phosphothreonine. The MPN domain occupies 262–392 (TIYLPKLLKK…FRLLDPEGLQ (131 aa)). Zn(2+) is bound by residues His-341, His-343, Asp-354, His-356, Cys-397, His-404, and His-406. The short motif at 341–354 (HTHPTQTCFMSSVD) is the JAMM motif element.

Belongs to the peptidase M67C family. Zn(2+) is required as a cofactor.

The protein resides in the cytoplasm. Its subcellular location is the endosome. Zinc metalloprotease that specifically cleaves 'Lys-63'-linked polyubiquitin chains. Does not cleave 'Lys-48'-linked polyubiquitin chains. Plays a role in the multivesicular body (MVB) sorting pathway. Required for ubiquitin-dependent sorting of proteins into the endosome and subsequent trafficking to the vacuole. May regulate MVB sorting through deubiquitination of ubiquitinated ESCRT proteins. The chain is AMSH-like protease sst2 (sst2) from Schizosaccharomyces pombe (strain 972 / ATCC 24843) (Fission yeast).